We begin with the raw amino-acid sequence, 181 residues long: Adenylyl-sulfate kinase (181 aa).

12–19 serves as a coordination point for ATP; sequence GLSGAGKT. The active-site Phosphoserine intermediate is the serine 86.

The protein belongs to the APS kinase family.

It catalyses the reaction adenosine 5'-phosphosulfate + ATP = 3'-phosphoadenylyl sulfate + ADP + H(+). The protein operates within sulfur metabolism; hydrogen sulfide biosynthesis; sulfite from sulfate: step 2/3. Functionally, catalyzes the synthesis of activated sulfate. This is Adenylyl-sulfate kinase from Rippkaea orientalis (strain PCC 8801 / RF-1) (Cyanothece sp. (strain PCC 8801)).